The sequence spans 239 residues: 2,3,4,5-tetrahydropyridine-2,6-dicarboxylate N-acetyltransferase (239 aa).

This sequence belongs to the transferase hexapeptide repeat family. DapH subfamily.

The catalysed reaction is (S)-2,3,4,5-tetrahydrodipicolinate + acetyl-CoA + H2O = L-2-acetamido-6-oxoheptanedioate + CoA. It participates in amino-acid biosynthesis; L-lysine biosynthesis via DAP pathway; LL-2,6-diaminopimelate from (S)-tetrahydrodipicolinate (acetylase route): step 1/3. Its function is as follows. Catalyzes the transfer of an acetyl group from acetyl-CoA to tetrahydrodipicolinate. This is 2,3,4,5-tetrahydropyridine-2,6-dicarboxylate N-acetyltransferase from Staphylococcus aureus (strain JH9).